Reading from the N-terminus, the 144-residue chain is tRNA-specific adenosine deaminase (144 aa).

The CMP/dCMP-type deaminase domain maps to 1 to 116 (MEQALKQAGI…SNLRYFNSSV (116 aa)). Histidine 48 lines the Zn(2+) pocket. The active-site Proton donor is the glutamate 50. The Zn(2+) site is built by cysteine 78 and cysteine 81.

The protein belongs to the cytidine and deoxycytidylate deaminase family. Homodimer. Requires Zn(2+) as cofactor.

It catalyses the reaction adenosine(34) in tRNA + H2O + H(+) = inosine(34) in tRNA + NH4(+). In terms of biological role, catalyzes the deamination of adenosine to inosine at the wobble position 34 of tRNA(Arg2). This chain is tRNA-specific adenosine deaminase, found in Rickettsia felis (strain ATCC VR-1525 / URRWXCal2) (Rickettsia azadi).